A 560-amino-acid chain; its full sequence is Chaperonin GroEL 2 (560 aa).

ATP-binding positions include Thr29–Pro32, Asp86–Thr90, Gly413, Asn478–Ala480, and Asp494.

Belongs to the chaperonin (HSP60) family. Forms a cylinder of 14 subunits composed of two heptameric rings stacked back-to-back. Interacts with the co-chaperonin GroES.

Its subcellular location is the cytoplasm. The catalysed reaction is ATP + H2O + a folded polypeptide = ADP + phosphate + an unfolded polypeptide.. Together with its co-chaperonin GroES, plays an essential role in assisting protein folding. The GroEL-GroES system forms a nano-cage that allows encapsulation of the non-native substrate proteins and provides a physical environment optimized to promote and accelerate protein folding. This chain is Chaperonin GroEL 2, found in Trichormus variabilis (strain ATCC 29413 / PCC 7937) (Anabaena variabilis).